The chain runs to 247 residues: tRNA (guanine-N(1)-)-methyltransferase (247 aa).

Glycine 126 is an S-adenosyl-L-methionine binding site.

This sequence belongs to the RNA methyltransferase TrmD family. Homodimer.

The protein resides in the cytoplasm. It carries out the reaction guanosine(37) in tRNA + S-adenosyl-L-methionine = N(1)-methylguanosine(37) in tRNA + S-adenosyl-L-homocysteine + H(+). In terms of biological role, specifically methylates guanosine-37 in various tRNAs. The sequence is that of tRNA (guanine-N(1)-)-methyltransferase from Jannaschia sp. (strain CCS1).